The following is an 842-amino-acid chain: Alanine--tRNA ligase (842 aa).

Positions 549, 553, 650, and 654 each coordinate Zn(2+).

It belongs to the class-II aminoacyl-tRNA synthetase family. Requires Zn(2+) as cofactor.

It localises to the cytoplasm. The enzyme catalyses tRNA(Ala) + L-alanine + ATP = L-alanyl-tRNA(Ala) + AMP + diphosphate. Catalyzes the attachment of alanine to tRNA(Ala) in a two-step reaction: alanine is first activated by ATP to form Ala-AMP and then transferred to the acceptor end of tRNA(Ala). Also edits incorrectly charged Ser-tRNA(Ala) and Gly-tRNA(Ala) via its editing domain. In Campylobacter jejuni subsp. jejuni serotype O:2 (strain ATCC 700819 / NCTC 11168), this protein is Alanine--tRNA ligase.